We begin with the raw amino-acid sequence, 101 residues long: Small ribosomal subunit protein uS14 (101 aa).

It belongs to the universal ribosomal protein uS14 family. As to quaternary structure, part of the 30S ribosomal subunit. Contacts proteins S3 and S10.

Binds 16S rRNA, required for the assembly of 30S particles and may also be responsible for determining the conformation of the 16S rRNA at the A site. This chain is Small ribosomal subunit protein uS14, found in Paracoccus denitrificans (strain Pd 1222).